Reading from the N-terminus, the 268-residue chain is UPF0328 protein ECU05_1640/ECU11_0090 (268 aa).

The protein belongs to the UPF0328 family.

The chain is UPF0328 protein ECU05_1640/ECU11_0090 from Encephalitozoon cuniculi (strain GB-M1) (Microsporidian parasite).